Consider the following 160-residue polypeptide: Transcription factor 12 (160 aa).

The interval 1–58 (NKEKDENLHEPPSSDDMKSDDESSQKDIKVSSRGRTSTNEDEDLNPEQKIEREKERRM) is disordered. Basic and acidic residues predominate over residues 15–30 (DDMKSDDESSQKDIKV). Serine 19 carries the phosphoserine modification. Lysine 29 is covalently cross-linked (Glycyl lysine isopeptide (Lys-Gly) (interchain with G-Cter in SUMO2)). Position 36 is a phosphothreonine (threonine 36). Serine 37 carries the phosphoserine modification. The span at 46 to 58 (PEQKIEREKERRM) shows a compositional bias: basic and acidic residues. Positions 55-108 (ERRMANNARERLRVRDINEAFKELGRMCQLHLKSEKPQTKLLILHQAVAVILSL) constitute a bHLH domain. Residues lysine 87 and lysine 131 each participate in a glycyl lysine isopeptide (Lys-Gly) (interchain with G-Cter in SUMO2) cross-link. The class A specific domain stretch occupies residues 110-133 (QQVRERNLNPKAACLKRREEEKVS). The interval 132 to 160 (VSVVSAEPPTTLPGTHPGLSETTNPMGHM) is disordered. Positions 139–150 (PPTTLPGTHPGL) are enriched in low complexity. Over residues 151 to 160 (SETTNPMGHM) the composition is skewed to polar residues.

In terms of assembly, efficient DNA binding requires dimerization with another bHLH protein. Forms homo- or heterooligomers with myogenin, E12 and ITF2 proteins. Interacts with PTF1A. Interacts with RUNX1T1. Interacts with NEUROD2. Interacts with BHLHA9.

Its subcellular location is the nucleus. In terms of biological role, transcriptional regulator. Involved in the initiation of neuronal differentiation. Activates transcription by binding to the E box (5'-CANNTG-3'). May be involved in the functional network that regulates the development of the GnRH axis. This Papio hamadryas (Hamadryas baboon) protein is Transcription factor 12 (TCF12).